Reading from the N-terminus, the 337-residue chain is uncharacterized protein (337 aa).

The span at 1–11 shows a compositional bias: acidic residues; that stretch reads MSEIEEEEEEG. The tract at residues 1–20 is disordered; the sequence is MSEIEEEEEEGSASAITGSR. An N-acetylserine modification is found at Ser2. Residues 50-130 are a coiled coil; the sequence is ALSTRVSALE…LQRDVSKLEG (81 aa). The tract at residues 139–242 is disordered; that stretch reads LQDDDQNAGT…PISPRRHSVS (104 aa). Over residues 170 to 182 the composition is skewed to low complexity; sequence SSIQSQQASEAIE. Polar residues predominate over residues 197-211; it reads LSASLPLVSQTTTPR. At Thr213 the chain carries Phosphothreonine. Ser217 bears the Phosphoserine mark. Residues 223–233 show a composition bias toward polar residues; it reads ASGTPKTTSRP. At Thr226 the chain carries Phosphothreonine. Position 235 is a phosphoserine (Ser235).

This is an uncharacterized protein from Arabidopsis thaliana (Mouse-ear cress).